Consider the following 259-residue polypeptide: Dihydroorotate dehydrogenase B (NAD(+)), electron transfer subunit (259 aa).

Positions 2-102 (MQKQNMIVVN…LGPLGHGFPV (101 aa)) constitute an FAD-binding FR-type domain. FAD is bound by residues 53–56 (RPIS), 70–72 (LYR), and 77–78 (GT). Cys-221, Cys-226, Cys-229, and Cys-246 together coordinate [2Fe-2S] cluster.

The protein belongs to the PyrK family. As to quaternary structure, heterotetramer of 2 PyrK and 2 PyrD type B subunits. [2Fe-2S] cluster serves as cofactor. It depends on FAD as a cofactor.

The protein operates within pyrimidine metabolism; UMP biosynthesis via de novo pathway; orotate from (S)-dihydroorotate (NAD(+) route): step 1/1. Responsible for channeling the electrons from the oxidation of dihydroorotate from the FMN redox center in the PyrD type B subunit to the ultimate electron acceptor NAD(+). This chain is Dihydroorotate dehydrogenase B (NAD(+)), electron transfer subunit, found in Bacillus cereus (strain ZK / E33L).